The following is a 174-amino-acid chain: Adipose-secreted signaling protein (174 aa).

Ala-2 carries the N-acetylalanine modification. Thr-147 carries the post-translational modification Phosphothreonine.

The protein belongs to the ADISSP family. In terms of tissue distribution, expression is adipose-specific and highly brown adipose tissue-enriched.

The protein resides in the secreted. Its function is as follows. Adipocyte-secreted protein (adipokine) that acts as a key regulator for white adipose tissue (WAT) thermogenesis and glucose homeostasis at least in part through activation of protein kinase A (PKA). The polypeptide is Adipose-secreted signaling protein (Mus musculus (Mouse)).